The primary structure comprises 331 residues: Retinol dehydrogenase 13 (331 aa).

An N-acetylserine modification is found at Ser-2. 45–51 contributes to the NADP(+) binding site; that stretch reads GANTGIG. Ser-174 contributes to the substrate binding site. Residue Tyr-200 is the Proton acceptor of the active site. Ser-323 is subject to Phosphoserine.

Belongs to the short-chain dehydrogenases/reductases (SDR) family. As to expression, widely expressed. In the retina, detected in the inner segment of the photoreceptor cells. Weak signals are observed in a small population of inner nuclear neurons and the inner plexiform layer.

It localises to the mitochondrion inner membrane. The catalysed reaction is all-trans-retinol + NADP(+) = all-trans-retinal + NADPH + H(+). Its pathway is cofactor metabolism; retinol metabolism. Functionally, retinol dehydrogenase with a clear preference for NADP. Oxidizes all-trans-retinol, but seems to reduce all-trans-retinal with much higher efficiency. Has no activity toward steroids. This chain is Retinol dehydrogenase 13 (RDH13), found in Homo sapiens (Human).